We begin with the raw amino-acid sequence, 191 residues long: MATPNRPWMGLLLLGVLGVLQTPAPTEAALQPNFEEDKFLGRWFTSGLASNSSWFLEKRKVLSMCKSEVAPAADGGLNVTSTFLRKDQCETRTLLLRPAGPPGCYSYTSPHWSSTHEVSVAETDYETYALLYTESVRGPGPDSLMATLYSRTQTPRAEVKEKFTTFARSLGFTEEGIVFLPKTDKCMEVRT.

The N-terminal stretch at 1–24 (MATPNRPWMGLLLLGVLGVLQTPA) is a signal peptide. Residue asparagine 51 is glycosylated (N-linked (GlcNAc...) asparagine). Catalysis depends on cysteine 65, which acts as the Nucleophile. Asparagine 78 is a glycosylation site (N-linked (GlcNAc...) asparagine). A disulfide bridge links cysteine 89 with cysteine 186.

Belongs to the calycin superfamily. Lipocalin family. In terms of assembly, monomer. In the male reproductive system, it is expressed in the testis and epididymis, and is secreted into the seminal fluid.

The protein localises to the rough endoplasmic reticulum. Its subcellular location is the nucleus membrane. The protein resides in the golgi apparatus. It is found in the cytoplasm. It localises to the perinuclear region. The protein localises to the secreted. It carries out the reaction prostaglandin H2 = prostaglandin D2. Catalyzes the conversion of PGH2 to PGD2, a prostaglandin involved in smooth muscle contraction/relaxation and a potent inhibitor of platelet aggregation. Involved in a variety of CNS functions, such as sedation, NREM sleep and PGE2-induced allodynia, and may have an anti-apoptotic role in oligodendrocytes. Binds small non-substrate lipophilic molecules, including biliverdin, bilirubin, retinal, retinoic acid and thyroid hormone, and may act as a scavenger for harmful hydrophobic molecules and as a secretory retinoid and thyroid hormone transporter. Possibly involved in development and maintenance of the blood-brain, blood-retina, blood-aqueous humor and blood-testis barrier. It is likely to play important roles in both maturation and maintenance of the central nervous system and male reproductive system. Involved in PLA2G3-dependent maturation of mast cells. PLA2G3 is secreted by immature mast cells and acts on nearby fibroblasts upstream to PTDGS to synthesize PGD2, which in turn promotes mast cell maturation and degranulation via PTGDR. The polypeptide is Prostaglandin-H2 D-isomerase (PTGDS) (Ovis aries (Sheep)).